A 421-amino-acid chain; its full sequence is ATP-dependent RNA helicase RhlB (421 aa).

Residues 9–37 carry the Q motif motif; the sequence is QKFSDFALHPKVVEALEKKGFHNCTPIQA. The Helicase ATP-binding domain occupies 40–219; that stretch reads LPLTLAGRDV…FEQMNNAEYI (180 aa). An ATP-binding site is contributed by 53–60; sequence AQTGTGKT. Positions 165-168 match the DEAD box motif; it reads DEAD. Residues 245-390 enclose the Helicase C-terminal domain; it reads RLLQTLIEEE…VSKYNPDALM (146 aa). Positions 392–421 are disordered; it reads DLPKPLRLTRPRTGNGPRRTGAPRNRRRSG. A compositionally biased stretch (low complexity) spans 402 to 414; sequence PRTGNGPRRTGAP.

It belongs to the DEAD box helicase family. RhlB subfamily. In terms of assembly, component of the RNA degradosome, which is a multiprotein complex involved in RNA processing and mRNA degradation.

It is found in the cytoplasm. It catalyses the reaction ATP + H2O = ADP + phosphate + H(+). In terms of biological role, DEAD-box RNA helicase involved in RNA degradation. Has RNA-dependent ATPase activity and unwinds double-stranded RNA. This is ATP-dependent RNA helicase RhlB from Escherichia fergusonii (strain ATCC 35469 / DSM 13698 / CCUG 18766 / IAM 14443 / JCM 21226 / LMG 7866 / NBRC 102419 / NCTC 12128 / CDC 0568-73).